A 98-amino-acid polypeptide reads, in one-letter code: NADH-ubiquinone oxidoreductase chain 4L (98 aa).

A run of 3 helical transmembrane segments spans residues 2–22 (PSIS…MLVF), 29–49 (SLLC…LFIM), and 61–81 (ILLL…LVMV).

The protein belongs to the complex I subunit 4L family. In terms of assembly, core subunit of respiratory chain NADH dehydrogenase (Complex I) which is composed of 45 different subunits.

The protein resides in the mitochondrion inner membrane. The catalysed reaction is a ubiquinone + NADH + 5 H(+)(in) = a ubiquinol + NAD(+) + 4 H(+)(out). Its function is as follows. Core subunit of the mitochondrial membrane respiratory chain NADH dehydrogenase (Complex I) which catalyzes electron transfer from NADH through the respiratory chain, using ubiquinone as an electron acceptor. Part of the enzyme membrane arm which is embedded in the lipid bilayer and involved in proton translocation. This is NADH-ubiquinone oxidoreductase chain 4L (MT-ND4L) from Lepilemur sahamalazensis (Sahamalaza sportive lemur).